Consider the following 212-residue polypeptide: Spore germination lipase LipC (212 aa).

Ser11 serves as the catalytic Nucleophile. Residues Gly50 and Asn82 each coordinate substrate. Residues Asp186 and His189 contribute to the active site.

This sequence belongs to the 'GDSL' lipolytic enzyme family.

Its subcellular location is the spore coat. In terms of biological role, lipase involved in spore germination. This chain is Spore germination lipase LipC (lipC), found in Bacillus licheniformis (strain ATCC 14580 / DSM 13 / JCM 2505 / CCUG 7422 / NBRC 12200 / NCIMB 9375 / NCTC 10341 / NRRL NRS-1264 / Gibson 46).